Consider the following 166-residue polypeptide: Ribonuclease H (166 aa).

The region spanning 10 to 151 (KRVRVDMFTD…ADELARRGTS (142 aa)) is the RNase H type-1 domain. Mg(2+)-binding residues include Asp-19, Glu-57, Asp-79, and Asp-143. Basic and acidic residues predominate over residues 145–157 (LARRGTSEARQGK). Residues 145–166 (LARRGTSEARQGKVDGQSSTIL) are disordered.

Belongs to the RNase H family. As to quaternary structure, monomer. It depends on Mg(2+) as a cofactor.

Its subcellular location is the cytoplasm. It catalyses the reaction Endonucleolytic cleavage to 5'-phosphomonoester.. In terms of biological role, endonuclease that specifically degrades the RNA of RNA-DNA hybrids. This Rhodospirillum rubrum (strain ATCC 11170 / ATH 1.1.1 / DSM 467 / LMG 4362 / NCIMB 8255 / S1) protein is Ribonuclease H.